A 434-amino-acid chain; its full sequence is NADH-quinone oxidoreductase subunit F 1 (434 aa).

Residue 54–63 participates in NAD(+) binding; it reads GRGGAGFPTG. Position 166–213 (166–213) interacts with FMN; that stretch reads GAGAYICGEETALLESLEGKKGQPRLKPPFPANMGLYGCPTTVNNVES. [4Fe-4S] cluster contacts are provided by Cys345, Cys348, Cys351, and Cys391.

The protein belongs to the complex I 51 kDa subunit family. FMN serves as cofactor. The cofactor is [4Fe-4S] cluster.

It carries out the reaction a quinone + NADH + 5 H(+)(in) = a quinol + NAD(+) + 4 H(+)(out). NDH-1 shuttles electrons from NADH, via FMN and iron-sulfur (Fe-S) centers, to quinones in the respiratory chain. The immediate electron acceptor for the enzyme in this species is believed to be ubiquinone. Couples the redox reaction to proton translocation (for every two electrons transferred, four hydrogen ions are translocated across the cytoplasmic membrane), and thus conserves the redox energy in a proton gradient. This Rhizobium meliloti (strain 1021) (Ensifer meliloti) protein is NADH-quinone oxidoreductase subunit F 1 (nuoF1).